Reading from the N-terminus, the 353-residue chain is tRNA-cytidine(32) 2-sulfurtransferase (353 aa).

Positions 49–54 (SGGKDS) match the PP-loop motif motif. Residues Cys-124, Cys-127, and Cys-215 each coordinate [4Fe-4S] cluster.

It belongs to the TtcA family. Homodimer. Requires Mg(2+) as cofactor. The cofactor is [4Fe-4S] cluster.

The protein localises to the cytoplasm. It carries out the reaction cytidine(32) in tRNA + S-sulfanyl-L-cysteinyl-[cysteine desulfurase] + AH2 + ATP = 2-thiocytidine(32) in tRNA + L-cysteinyl-[cysteine desulfurase] + A + AMP + diphosphate + H(+). It participates in tRNA modification. Its function is as follows. Catalyzes the ATP-dependent 2-thiolation of cytidine in position 32 of tRNA, to form 2-thiocytidine (s(2)C32). The sulfur atoms are provided by the cysteine/cysteine desulfurase (IscS) system. The polypeptide is tRNA-cytidine(32) 2-sulfurtransferase (Sodalis glossinidius (strain morsitans)).